Reading from the N-terminus, the 252-residue chain is 2-succinyl-6-hydroxy-2,4-cyclohexadiene-1-carboxylate synthase (252 aa).

The protein belongs to the AB hydrolase superfamily. MenH family. In terms of assembly, monomer.

It carries out the reaction 5-enolpyruvoyl-6-hydroxy-2-succinyl-cyclohex-3-ene-1-carboxylate = (1R,6R)-6-hydroxy-2-succinyl-cyclohexa-2,4-diene-1-carboxylate + pyruvate. It participates in quinol/quinone metabolism; 1,4-dihydroxy-2-naphthoate biosynthesis; 1,4-dihydroxy-2-naphthoate from chorismate: step 3/7. The protein operates within quinol/quinone metabolism; menaquinone biosynthesis. Catalyzes a proton abstraction reaction that results in 2,5-elimination of pyruvate from 2-succinyl-5-enolpyruvyl-6-hydroxy-3-cyclohexene-1-carboxylate (SEPHCHC) and the formation of 2-succinyl-6-hydroxy-2,4-cyclohexadiene-1-carboxylate (SHCHC). In Salmonella enteritidis PT4 (strain P125109), this protein is 2-succinyl-6-hydroxy-2,4-cyclohexadiene-1-carboxylate synthase.